The chain runs to 541 residues: Zinc finger protein 503 (541 aa).

A compositionally biased stretch (polar residues) spans 1–18 (MSNSPLGSGSRISHFTTE). Disordered regions lie at residues 1 to 49 (MSNS…QAGR) and 97 to 255 (TCSQ…SSSV). Positions 137 to 157 (AEDKSSFKPYSKHPDKKDQSA) are enriched in basic and acidic residues. Low complexity predominate over residues 236-255 (SLSAAPSPTPASSSSSSSSV). A C2H2-type zinc finger spans residues 411-439 (HVCNWVSATGPCDKRFSSSEELLGHLRTH). The disordered stretch occupies residues 474–511 (GASPGPLTLRSPHHHPLGLSSSRYHPYSKSPLPSGGAP).

Belongs to the Elbow/Noc family.

The protein localises to the nucleus. May function as a transcriptional repressor. This chain is Zinc finger protein 503 (znf503), found in Xenopus tropicalis (Western clawed frog).